A 295-amino-acid polypeptide reads, in one-letter code: uncharacterized protein (295 aa).

Residues 1-19 form the signal peptide; that stretch reads MRKLLLIITVFFTFNVAQA.

This is an uncharacterized protein from Rickettsia conorii (strain ATCC VR-613 / Malish 7).